Consider the following 143-residue polypeptide: Ribosome maturation factor RimP (143 aa).

The protein belongs to the RimP family.

It localises to the cytoplasm. In terms of biological role, required for maturation of 30S ribosomal subunits. This Neisseria meningitidis serogroup C / serotype 2a (strain ATCC 700532 / DSM 15464 / FAM18) protein is Ribosome maturation factor RimP.